Reading from the N-terminus, the 359-residue chain is Protein-glutamate methylesterase/protein-glutamine glutaminase 2 (359 aa).

In terms of domain architecture, Response regulatory spans 6–123 (KVMIVDDSAL…KSFLEDASND (118 aa)). A 4-aspartylphosphate modification is found at D57. The CheB-type methylesterase domain occupies 167 to 359 (ERTTDQLVAI…GAIVGYGKSC (193 aa)). Catalysis depends on residues S179, H205, and D301.

Belongs to the CheB family. Post-translationally, phosphorylated by CheA. Phosphorylation of the N-terminal regulatory domain activates the methylesterase activity.

Its subcellular location is the cytoplasm. It catalyses the reaction [protein]-L-glutamate 5-O-methyl ester + H2O = L-glutamyl-[protein] + methanol + H(+). The enzyme catalyses L-glutaminyl-[protein] + H2O = L-glutamyl-[protein] + NH4(+). Its function is as follows. Involved in chemotaxis. Part of a chemotaxis signal transduction system that modulates chemotaxis in response to various stimuli. Catalyzes the demethylation of specific methylglutamate residues introduced into the chemoreceptors (methyl-accepting chemotaxis proteins or MCP) by CheR. Also mediates the irreversible deamidation of specific glutamine residues to glutamic acid. The protein is Protein-glutamate methylesterase/protein-glutamine glutaminase 2 of Dechloromonas aromatica (strain RCB).